Reading from the N-terminus, the 248-residue chain is 5'-nucleotidase SurE (248 aa).

Residues Asp-8, Asp-9, Ser-39, and Asn-91 each coordinate a divalent metal cation.

It belongs to the SurE nucleotidase family. A divalent metal cation is required as a cofactor.

It localises to the cytoplasm. It carries out the reaction a ribonucleoside 5'-phosphate + H2O = a ribonucleoside + phosphate. Nucleotidase that shows phosphatase activity on nucleoside 5'-monophosphates. The polypeptide is 5'-nucleotidase SurE (Shewanella amazonensis (strain ATCC BAA-1098 / SB2B)).